A 242-amino-acid polypeptide reads, in one-letter code: Venom nerve growth factor 2 (242 aa).

The signal sequence occupies residues 1–18 (MSMLCYTLIIAFLIGIWA). A propeptide spanning residues 19 to 125 (APKSEDNVPL…ALNRNIRSKR (107 aa)) is cleaved from the precursor. The segment at 46-69 (KALKTSRNTDQRHPAPKKAEDQEL) is disordered. A compositionally biased stretch (basic and acidic residues) spans 52 to 66 (RNTDQRHPAPKKAED). 3 cysteine pairs are disulfide-bonded: Cys139-Cys203, Cys181-Cys231, and Cys191-Cys233. Asn147 carries N-linked (GlcNAc...) asparagine glycosylation.

The protein belongs to the NGF-beta family. In terms of assembly, homodimer; non-covalently linked. Expressed by the venom gland.

It localises to the secreted. In terms of biological role, nerve growth factor is important for the development and maintenance of the sympathetic and sensory nervous systems. It stimulates division and differentiation of sympathetic and embryonic sensory neurons as well as basal forebrain cholinergic neurons in the brain. Its relevance in the snake venom is not clear. However, it has been shown to inhibit metalloproteinase-dependent proteolysis of platelet glycoprotein Ib alpha, suggesting a metalloproteinase inhibition to prevent metalloprotease autodigestion and/or protection against prey proteases. Binds a lipid between the two protein chains in the homodimer. The lipid-bound form promotes histamine relase from mouse mast cells, contrary to the lipid-free form. This Demansia vestigiata (Lesser black whip snake) protein is Venom nerve growth factor 2.